The following is a 487-amino-acid chain: Argininosuccinate lyase (487 aa).

It belongs to the lyase 1 family. Argininosuccinate lyase subfamily.

Its subcellular location is the cytoplasm. It carries out the reaction 2-(N(omega)-L-arginino)succinate = fumarate + L-arginine. It participates in amino-acid biosynthesis; L-arginine biosynthesis; L-arginine from L-ornithine and carbamoyl phosphate: step 3/3. This chain is Argininosuccinate lyase, found in Natranaerobius thermophilus (strain ATCC BAA-1301 / DSM 18059 / JW/NM-WN-LF).